The following is a 243-amino-acid chain: Probable 6-oxopurine nucleoside phosphorylase (243 aa).

Residues Thr-8 and 48–49 (RH) each bind phosphate. Met-174 lines the substrate pocket. Thr-175 serves as a coordination point for phosphate. 198–200 (NYA) contributes to the substrate binding site.

It belongs to the PNP/MTAP phosphorylase family. MTAP subfamily. In terms of assembly, homohexamer. Dimer of a homotrimer.

The enzyme catalyses a purine D-ribonucleoside + phosphate = a purine nucleobase + alpha-D-ribose 1-phosphate. It functions in the pathway purine metabolism; purine nucleoside salvage. In terms of biological role, purine nucleoside phosphorylase which is highly specific for 6-oxopurine nucleosides. Cleaves guanosine or inosine to respective bases and sugar-1-phosphate molecules. Involved in purine salvage. In Archaeoglobus fulgidus (strain ATCC 49558 / DSM 4304 / JCM 9628 / NBRC 100126 / VC-16), this protein is Probable 6-oxopurine nucleoside phosphorylase.